Reading from the N-terminus, the 515-residue chain is Bifunctional purine biosynthesis protein PurH (515 aa).

The 145-residue stretch at 1–145 (MTKRALISVS…KNHASVTVVV (145 aa)) folds into the MGS-like domain.

It belongs to the PurH family.

The catalysed reaction is (6R)-10-formyltetrahydrofolate + 5-amino-1-(5-phospho-beta-D-ribosyl)imidazole-4-carboxamide = 5-formamido-1-(5-phospho-D-ribosyl)imidazole-4-carboxamide + (6S)-5,6,7,8-tetrahydrofolate. It catalyses the reaction IMP + H2O = 5-formamido-1-(5-phospho-D-ribosyl)imidazole-4-carboxamide. It participates in purine metabolism; IMP biosynthesis via de novo pathway; 5-formamido-1-(5-phospho-D-ribosyl)imidazole-4-carboxamide from 5-amino-1-(5-phospho-D-ribosyl)imidazole-4-carboxamide (10-formyl THF route): step 1/1. Its pathway is purine metabolism; IMP biosynthesis via de novo pathway; IMP from 5-formamido-1-(5-phospho-D-ribosyl)imidazole-4-carboxamide: step 1/1. The sequence is that of Bifunctional purine biosynthesis protein PurH from Streptococcus mutans serotype c (strain ATCC 700610 / UA159).